A 262-amino-acid chain; its full sequence is Intron-encoded DNA endonuclease ai2b (262 aa).

Belongs to the LAGLIDADG endonuclease family.

It localises to the mitochondrion. In terms of biological role, mitochondrial DNA endonuclease involved in intron homing. This Dictyostelium discoideum (Social amoeba) protein is Intron-encoded DNA endonuclease ai2b (ai2b).